A 324-amino-acid chain; its full sequence is Uric acid degradation bifunctional protein TTL (324 aa).

Ala-2 carries the N-acetylalanine modification. Residues 2–29 (AMEIGEDEWKVCCGSSEFAKQMSTSGPL) form a required for BRI1-binding region. Positions 2–161 (AMEIGEDEWK…LRMAKLFSDK (160 aa)) are OHCU decarboxylase. The Proton donor; for OHCU decarboxylase activity role is filled by His-58. His-58, Pro-59, Glu-80, Phe-111, Ile-113, and Ala-115 together coordinate (S)-allantoin. Positions 178 to 324 (KPQDRLRIIG…PFSFSTYRGS (147 aa)) are HIU hydrolase. The Internal peroxisomal targeting signal (PTS2) signature appears at 182-190 (RLRIIGGHL).

The protein in the N-terminal section; belongs to the OHCU decarboxylase family. This sequence in the C-terminal section; belongs to the transthyretin family. 5-hydroxyisourate hydrolase subfamily. Homodimer. Forms tetramers. Interacts with BRI1 in a kinase-dependent manner. Interacts with B1L. In terms of processing, phosphorylated by BRI1 in vitro. Expressed ubiquitously with highest levels in flowers buds and elongating inflorescences. In terms of tissue distribution, mainly expressed in stems and leaves, and, to a lower extent, in flowers, flower buds and seedlings. As to expression, strongly expressed in flower buds and leaves, to a lower extent in stems, and at low levels in seedlings and flowers.

It is found in the cell membrane. The protein resides in the peroxisome. It localises to the cytoplasm. Its subcellular location is the cytosol. The catalysed reaction is 5-hydroxyisourate + H2O = 5-hydroxy-2-oxo-4-ureido-2,5-dihydro-1H-imidazole-5-carboxylate + H(+). It catalyses the reaction 5-hydroxy-2-oxo-4-ureido-2,5-dihydro-1H-imidazole-5-carboxylate + H(+) = (S)-allantoin + CO2. The protein operates within purine metabolism; urate degradation; (S)-allantoin from urate: step 2/3. It participates in purine metabolism; urate degradation; (S)-allantoin from urate: step 3/3. Its function is as follows. Involved in the last two steps of the degradation of uric acid, i.e. the hydrolysis of 5-hydroxyisourate (HIU) to 2-oxo-4-hydroxy-4-carboxy-5-ureidoimidazoline (OHCU) and its stereoselective decarboxylation to (S)-allantoin, a major ureide compound. Might function as a negative regulator to modulate brassinosteroid-mediated plant growth. Together with B1L, prevents plant growth and development, but by opposition to B1L, negatively regulates cold tolerance, probably in a brassinosteroid (BR) and allantoin-dependent manner. This chain is Uric acid degradation bifunctional protein TTL, found in Arabidopsis thaliana (Mouse-ear cress).